A 383-amino-acid polypeptide reads, in one-letter code: L-aspartate/L-glutamate decarboxylase (383 aa).

Position 232 is an N6-(pyridoxal phosphate)lysine (Lys232).

The protein belongs to the group II decarboxylase family. MfnA subfamily. Monomer. It depends on pyridoxal 5'-phosphate as a cofactor.

It carries out the reaction L-aspartate + H(+) = beta-alanine + CO2. The catalysed reaction is L-glutamate + H(+) = 4-aminobutanoate + CO2. The enzyme catalyses L-cysteate + H(+) = taurine + CO2. It catalyses the reaction 3-sulfino-L-alanine + H(+) = hypotaurine + CO2. The protein operates within cofactor biosynthesis; coenzyme A biosynthesis. In terms of biological role, catalyzes the decarboxylation of L-aspartate to produce beta-alanine, and the decarboxylation of L-glutamate to produce 4-aminobutanoate. Can also use cysteate and, to a lesser extent, cysteine sulfite (3-sulfino-L-alanine), but not L-tyrosine. Specific activities toward L-aspartate and cysteate are higher than toward L-glutamate. The protein is L-aspartate/L-glutamate decarboxylase of Pyrococcus horikoshii (strain ATCC 700860 / DSM 12428 / JCM 9974 / NBRC 100139 / OT-3).